The chain runs to 65 residues: MKEKNMKKNDTIELQLGKYLEDDMIELAEGDESHGGTTPATPAISILSAYISTNTCPTTKCTRAC.

Positions Met1 to Gly36 are excised as a propeptide. At Thr37 the chain carries 2-oxobutanoic acid. 2,3-didehydrobutyrine occurs at positions 38 and 41. 2,3-didehydroalanine (Ser) occurs at positions 45 and 48. Residues Ser52–Cys56 constitute a cross-link (lanthionine (Ser-Cys)). 2 cross-links (beta-methyllanthionine (Thr-Cys)) span residues Thr58–Cys61 and Thr62–Cys65.

In terms of processing, maturation of lantibiotics involves the enzymatic conversion of Thr, and Ser into dehydrated AA and the formation of thioether bonds with cysteine. This is followed by membrane translocation and cleavage of the modified precursor. It is not established whether the 2,3-didehydrobutyrines are the E- or Z-isomers. In the NMR model they were assumed to be the Z-isomer.

It is found in the secreted. In terms of biological role, lanthionine-containing peptide antibiotic (lantibiotic) active on Gram-positive bacteria. The bactericidal activity of lantibiotics is based on depolarization of energized bacterial cytoplasmic membranes, initiated by the formation of aqueous transmembrane pores. When present individually lacticin 3147 A2 exhibits weak activity towards L.lactis strain AM2 and L.lactis strain HP, and no activity towards L.lactis strain IFPL359, but when combined with lacticin 3147 A1 it displays strong activity towards all three strains. This Lactococcus lactis subsp. lactis (Streptococcus lactis) protein is Lantibiotic lacticin 3147 A2.